A 51-amino-acid polypeptide reads, in one-letter code: DNA-directed RNA polymerases II, IV and V subunit 12 (51 aa).

4 residues coordinate Zn(2+): Cys-12, Cys-15, Cys-29, and Cys-32.

Belongs to the archaeal Rpo12/eukaryotic RPC10 RNA polymerase subunit family. In terms of assembly, component of the RNA polymerase II, IV and V complexes. Associates with the mediator complex. Interacts with NRPD1.

It localises to the nucleus. In terms of biological role, DNA-dependent RNA polymerase catalyzes the transcription of DNA into RNA using the four ribonucleoside triphosphates as substrates. Component of RNA polymerase II which synthesizes mRNA precursors and many functional non-coding RNAs. Pol II is the central component of the basal RNA polymerase II transcription machinery. It is composed of mobile elements that move relative to each other. Component of RNA polymerases IV and V which mediate short-interfering RNAs (siRNA) accumulation and subsequent RNA-directed DNA methylation-dependent (RdDM) transcriptional gene silencing (TGS) of endogenous repeated sequences, including transposable elements. The chain is DNA-directed RNA polymerases II, IV and V subunit 12 (NRPB12) from Arabidopsis thaliana (Mouse-ear cress).